The following is a 1444-amino-acid chain: Probable serine/threonine-protein kinase irlC (1444 aa).

Residues 335 to 370 (TLINNNNNNNNNNNNNNNNNNNNNNNNNNNNNNNSK) are disordered. The segment covering 338 to 368 (NNNNNNNNNNNNNNNNNNNNNNNNNNNNNNN) has biased composition (low complexity). An SWIM-type zinc finger spans residues 495–529 (FTFYLSFGEIFTCSCEDYKREFSCKHMFFILLNYY). Low complexity predominate over residues 584 to 613 (TSPFQSINNNNNNNLNNNNNNNLNNNNNNE). Disordered stretches follow at residues 584 to 619 (TSPF…NKFK) and 864 to 938 (QKEK…ITPI). 2 coiled-coil regions span residues 593–620 (NNNN…KFKE) and 847–879 (IKAE…KSKI). The span at 864 to 876 (QKEKKKQKQKQSK) shows a compositional bias: basic residues. Over residues 885-937 (SSSSSSSSSPSTSNTTITSTTPTTTTTTTTTTTPTTTTTTTTTSSPKQKPITP) the composition is skewed to low complexity. The region spanning 981 to 1246 (RKEENVLGRG…IEKILLHPFF (266 aa)) is the Protein kinase domain. ATP contacts are provided by residues 987–995 (LGRGSNGTL) and Lys1010. The active-site Proton acceptor is the Asp1116. Residues 1279–1444 (NYQEINLKNN…LIYFNDLIIK (166 aa)) form the KEN domain.

Belongs to the protein kinase superfamily. Ser/Thr protein kinase family.

The enzyme catalyses L-seryl-[protein] + ATP = O-phospho-L-seryl-[protein] + ADP + H(+). It catalyses the reaction L-threonyl-[protein] + ATP = O-phospho-L-threonyl-[protein] + ADP + H(+). This Dictyostelium discoideum (Social amoeba) protein is Probable serine/threonine-protein kinase irlC (irlC).